Reading from the N-terminus, the 459-residue chain is Bifunctional protein GlmU (459 aa).

The segment at 1–229 (MSNFAIILAA…FDESLGVNDR (229 aa)) is pyrophosphorylase. Residues 8–11 (LAAG), Lys-22, Gln-72, and 77–78 (GT) contribute to the UDP-N-acetyl-alpha-D-glucosamine site. Asp-102 contacts Mg(2+). Gly-139, Glu-154, Asn-169, and Asn-227 together coordinate UDP-N-acetyl-alpha-D-glucosamine. Asn-227 provides a ligand contact to Mg(2+). Residues 230–250 (VALATAESVMRRRINHKHMVN) form a linker region. Positions 251–459 (GVSFVNPEAT…TRLPHHPKNQ (209 aa)) are N-acetyltransferase. UDP-N-acetyl-alpha-D-glucosamine is bound by residues Arg-332 and Lys-350. His-362 serves as the catalytic Proton acceptor. UDP-N-acetyl-alpha-D-glucosamine contacts are provided by Tyr-365 and Asn-376. Residues Ala-379, 385–386 (NY), Ser-404, Ala-422, and Arg-439 contribute to the acetyl-CoA site.

The protein in the N-terminal section; belongs to the N-acetylglucosamine-1-phosphate uridyltransferase family. In the C-terminal section; belongs to the transferase hexapeptide repeat family. Homotrimer. The cofactor is Mg(2+).

The protein localises to the cytoplasm. It carries out the reaction alpha-D-glucosamine 1-phosphate + acetyl-CoA = N-acetyl-alpha-D-glucosamine 1-phosphate + CoA + H(+). It catalyses the reaction N-acetyl-alpha-D-glucosamine 1-phosphate + UTP + H(+) = UDP-N-acetyl-alpha-D-glucosamine + diphosphate. It functions in the pathway nucleotide-sugar biosynthesis; UDP-N-acetyl-alpha-D-glucosamine biosynthesis; N-acetyl-alpha-D-glucosamine 1-phosphate from alpha-D-glucosamine 6-phosphate (route II): step 2/2. The protein operates within nucleotide-sugar biosynthesis; UDP-N-acetyl-alpha-D-glucosamine biosynthesis; UDP-N-acetyl-alpha-D-glucosamine from N-acetyl-alpha-D-glucosamine 1-phosphate: step 1/1. Its pathway is bacterial outer membrane biogenesis; LPS lipid A biosynthesis. In terms of biological role, catalyzes the last two sequential reactions in the de novo biosynthetic pathway for UDP-N-acetylglucosamine (UDP-GlcNAc). The C-terminal domain catalyzes the transfer of acetyl group from acetyl coenzyme A to glucosamine-1-phosphate (GlcN-1-P) to produce N-acetylglucosamine-1-phosphate (GlcNAc-1-P), which is converted into UDP-GlcNAc by the transfer of uridine 5-monophosphate (from uridine 5-triphosphate), a reaction catalyzed by the N-terminal domain. This is Bifunctional protein GlmU from Streptococcus pneumoniae (strain JJA).